The primary structure comprises 283 residues: Formamidopyrimidine-DNA glycosylase (283 aa).

Pro-2 functions as the Schiff-base intermediate with DNA in the catalytic mechanism. Glu-3 functions as the Proton donor in the catalytic mechanism. Lys-58 functions as the Proton donor; for beta-elimination activity in the catalytic mechanism. Residues His-100, Arg-119, and Arg-162 each contribute to the DNA site. An FPG-type zinc finger spans residues 247-283 (RVYGREGQPCVTPGCRGLVGRIVQSGRSSFHCPECQR). The active-site Proton donor; for delta-elimination activity is the Arg-273.

It belongs to the FPG family. As to quaternary structure, monomer. It depends on Zn(2+) as a cofactor.

It catalyses the reaction Hydrolysis of DNA containing ring-opened 7-methylguanine residues, releasing 2,6-diamino-4-hydroxy-5-(N-methyl)formamidopyrimidine.. The catalysed reaction is 2'-deoxyribonucleotide-(2'-deoxyribose 5'-phosphate)-2'-deoxyribonucleotide-DNA = a 3'-end 2'-deoxyribonucleotide-(2,3-dehydro-2,3-deoxyribose 5'-phosphate)-DNA + a 5'-end 5'-phospho-2'-deoxyribonucleoside-DNA + H(+). Functionally, involved in base excision repair of DNA damaged by oxidation or by mutagenic agents. Acts as a DNA glycosylase that recognizes and removes damaged bases. Has a preference for oxidized purines, such as 7,8-dihydro-8-oxoguanine (8-oxoG). Has AP (apurinic/apyrimidinic) lyase activity and introduces nicks in the DNA strand. Cleaves the DNA backbone by beta-delta elimination to generate a single-strand break at the site of the removed base with both 3'- and 5'-phosphates. This chain is Formamidopyrimidine-DNA glycosylase, found in Cereibacter sphaeroides (strain ATCC 17025 / ATH 2.4.3) (Rhodobacter sphaeroides).